The chain runs to 109 residues: U4-lycotoxin-Ls1a (109 aa).

Residues 1 to 22 form the signal peptide; it reads MKVLVLFSVLFLTLFSYSSTEA. Positions 23-44 are excised as a propeptide; sequence IDEFDSDAEEDMLSLMANEQVR. The interval 45-88 is knottin domain; that stretch reads AKACTPRLHDCSHDRHSCCRGELFKDVCYCFYPEGEDKTEVCSC. Disulfide bonds link C48-C63, C55-C72, C62-C88, and C74-C86. The linear cationic cytotoxin domain stretch occupies residues 89–108; the sequence is QQPKSHKYIEKVVDKAKTVV.

Belongs to the neurotoxin 19 (CSTX) family. 05 (U4-Lctx) subfamily. As to expression, expressed by the venom gland.

The protein resides in the secreted. Enhances the high-affinity desensitization of human P2RX3 purinoceptors. The chain is U4-lycotoxin-Ls1a from Lycosa singoriensis (Wolf spider).